The chain runs to 318 residues: Homeobox protein Nkx-2.5 (318 aa).

The segment at residues 137–196 (RRKPRVLFSQAQVYELERRFKQQRYLSPAERDQLASVLKLTSTQVKIWFQNRRYKCKRQR) is a DNA-binding region (homeobox).

This sequence belongs to the NK-2 homeobox family. In terms of assembly, homodimer (via the homeobox); binds DNA as homodimer. Interacts (via the homeobox) with TBX5 (via the T-box); this complex binds DNA. Interacts with HIPK1 and HIPK2, but not HIPK3. Interacts with the C-terminal zinc finger of GATA4 through its homeobox domain. Also interacts with JARID2 which represses its ability to activate transcription of ANF. Interacts with FBLIM1. Interacts with TBX18. Interacts with histone methyltransferase NSD2 (via HMG box). Interacts with NEDD9. Interacts with TBX1.

The protein resides in the nucleus. Transcription factor required for the development of the heart and the spleen. During heart development, acts as a transcriptional activator of NPPA/ANF in cooperation with GATA4. May cooperate with TBX2 to negatively modulate expression of NPPA/ANF in the atrioventricular canal. Binds to the core DNA motif of NPPA promoter. Together with PBX1, required for spleen development through a mechanism that involves CDKN2B repression. Positively regulates transcription of genes such as COL3A1 and MMP2, resulting in increased pulmonary endothelial fibrosis in response to hypoxia. The sequence is that of Homeobox protein Nkx-2.5 (Nkx2-5) from Rattus norvegicus (Rat).